The following is a 254-amino-acid chain: uncharacterized protein (254 aa).

This sequence belongs to the methyltransferase superfamily.

This is an uncharacterized protein from Mycobacterium bovis (strain ATCC BAA-935 / AF2122/97).